The chain runs to 759 residues: Glucosylceramidase (759 aa).

Glu247 serves as the catalytic Proton donor. Glu497 serves as the catalytic Nucleophile. Positions 576–600 are disordered; it reads AFENESQRDPQSPAYSESQRNTESY. Polar residues predominate over residues 584 to 599; the sequence is DPQSPAYSESQRNTES.

This sequence belongs to the glycosyl hydrolase 5 (cellulase A) family.

Its subcellular location is the membrane. The catalysed reaction is a beta-D-glucosyl-(1&lt;-&gt;1')-N-acylsphing-4-enine + H2O = an N-acylsphing-4-enine + D-glucose. In terms of biological role, specifically hydrolyzes the glucosidic linkage in glucosylceramide. May prevent accumulation of aberrent glucosylceramide containing immature ceramide. The sequence is that of Glucosylceramidase from Aspergillus fumigatus (Neosartorya fumigata).